We begin with the raw amino-acid sequence, 1873 residues long: MSSPILNTDDNNCVRVALRVRPLSKKEEAERSMEVVKYVDGEPQVIMGDNNQTFTFDYVFNGKSRQQEIFDDCVANLVDCLFEGYNSTILAYGQTGSGKTFTMGTTSTIGIPTEELGVIPRVIDFIYDKIDRKKDTHQLVLKVSFLELYNEEIRDMLNPYPTAGGLPIREKSNGEVYIPGLVEQIVRSRQQMEEALIRGSQSRTTGSTLMNSHSSRSHAIFSIIVEQTPINSPVTSSSTSSTSTSSSSDDKKQSKGKKKKKSSSPDSLSPNKDDDSSIMIDEDEEDDEEDEDDDIMSMDERNPSIRSMFHFVDLAGSERVKKTKAEGQRLKEGININGGLLALGNVISALGDTRRATTKPKHIPYRDSKLTRMLQSSLGGNSKTLMIACVSPADSNFEETLNTLKYAYRARNIMNKPVVNIDPVTQQILTYKTQIQTLKELLEKCTCRDIGDINSILASIPTVSIPPAPPLSTPTLTNNNNNNSSSNNNNNSNNNKLNVGGNNSGFSRTPSSSSLPPTNSSKSSIVKMNNSRNISSSSSSSSSSSSSSSLTTTPSITNNTATPSPTSVIVTNLSKEKEKEIFDLGMKVSQLEFENNMLQDISNKITSKYKALANRSRQLEEISQNFINNFSPNKDQTYFNELFEQFNSVLNQPTISPITPMMAAVSTQISSSNVIINSNSLLPMAEDNLLPGGKLESINNNNNNNNNSSEGIELFENDSEELSDLNQYISEKEEELELISKTKQQYQQMKEQFDQKVKELQSQLEEVTVEKDQALKELDKDKDKDKDNKDKDQYYEDEKLRLTQHYEKKLNELKQQLDQHAGSNKKDYQRLLDLKRKSEEKIDSLQQDIKDTKRQKSDLLKKMRDELKKRDDAKQTQAKELDALKREARKTEVIIDQLKNQSKKKDLLLQKKTDESESYKKKLKEIEVHKQRVIQPINSKSIPSNNNNNNSSGSVKSSNGSTASSASSANSSSSSSSSSSTNTSTTSTSATNNTTTSTSTSTPTTEQLNRKLLHRKSINVPYWREWLIHQIQKNLEKNELTELLQREFKNKEIFVRQANDLKKAFTSVPSKLSKSEYNEQSQFLETNIKLQNEKILKSQKDLTIISNDCLDSPEILRMVSNTSFDKLPKLIQSSIELCIEYAEINRKNQQIKFINVPTPPTLQSQQQHQKSQHFYIQPPQPLQSQQQQQEKQQKQSNSEQVLEQRSSTSDLLEGIKLAISESNNKNNINNNNNNVNIAKSQPILPSQQQLSSSQELAEEYTSPSTSSLGMKLDQLLDEIKLDKEKREKNKLLNGYPPMSGINYFNPPTPQPLSASSFLTSAAATTTTTTTTTTTTNKQQVPKSFAPLNNTNNNNNNNNSSPLLLISDDKLDHSVFDKDLLDVDILGNDSSNNGFSVININSNNNITIKKPPSSPTRPHRKTTSLQSSPLSLSLESGLATALANNGNNNNNSNNNDVFTRLASQPRPDSRLKKYRDKLNTDDYLMAIKRNMNREDENFMRCNWTFNGHDGGLLTLVLDEQNPSTLYSGGSDKNIKLWDLHTGDNMLDLSSPGPVRSLCINGSSGCMFSGGAERTVKVWDIRSPGNTNLCIFKTPSDVNCLVTYGNYVVSGLENGTFKVWDIRHMQKPLKTPLTTTPHHTGTIFSMSVTSKYLVTGSRDHTINLFHRDSFVLAQKLQPPHHDGVTSIAVLDDVIYSGSRDRTIKRWDVSSINNLINNNGENNSNNLITTQLAQQTVPILSNTPSNSNLIINNNNNIINNNNNNNNSSNNNKSSSAPSSTTSSLSSSLDNSTFSLLNQYQQNRLLNNAHNDWVNCLCIHNGMIFSGGKDSNIKGWDPLLSSNSLLLGHESSISCLTSSKEFLFSGSTDKCIKIWKC.

Residues 13 to 413 form the Kinesin motor domain; that stretch reads CVRVALRVRP…LKYAYRARNI (401 aa). 93–100 serves as a coordination point for ATP; it reads GQTGSGKT. Disordered stretches follow at residues 231 to 302, 463 to 567, 778 to 797, 841 to 891, 930 to 1008, 1179 to 1207, 1244 to 1267, 1328 to 1360, and 1403 to 1467; these read NSPV…DERN, VSIP…SPTS, LDKD…YYED, KIDS…ARKT, KQRV…TEQL, PQPL…QRSS, LPSQ…STSS, TTTT…NNSS, and NNIT…PRPD. Residues 232 to 247 are compositionally biased toward low complexity; sequence SPVTSSSTSSTSTSSS. Over residues 280–297 the composition is skewed to acidic residues; that stretch reads IDEDEEDDEEDEDDDIMS. Low complexity predominate over residues 473-567; it reads TPTLTNNNNN…NNTATPSPTS (95 aa). Positions 715–933 form a coiled coil; the sequence is FENDSEELSD…KEIEVHKQRV (219 aa). Composition is skewed to low complexity over residues 937-1005, 1182-1200, 1244-1254, 1348-1358, and 1423-1454; these read INSK…TPTT, LQSQ…NSEQ, LPSQQQLSSSQ, NNTNNNNNNNN, and SLQS…SNNN. WD repeat units follow at residues 1506–1546, 1548–1587, 1589–1628, 1636–1673, and 1677–1714; these read GHDG…NMLD, SSPG…NTNL, IFKT…KPLK, HHTG…LAQK, and PHHD…NLIN. The tract at residues 1758 to 1780 is disordered; it reads NNNNNNSSNNNKSSSAPSSTTSS. 2 WD repeats span residues 1805–1842 and 1844–1873; these read AHND…NSLL and GHES…IWKC.

It belongs to the TRAFAC class myosin-kinesin ATPase superfamily. Kinesin family.

It is found in the cytoplasm. Its subcellular location is the cytoskeleton. Microtubule-associated force-producing protein that plays a role in organelle transport. Its motor activity is directed toward the microtubule's plus end. Cooperates with kif10 and dynein to organize interphase microtubules. In Dictyostelium discoideum (Social amoeba), this protein is Kinesin-related protein 8 (kif8).